The following is a 746-amino-acid chain: WD repeat-containing protein 91 (746 aa).

Residues 183 to 215 (QRTNQVQEENEVLRQKLFALQAEIHRLKKEEQQ) adopt a coiled-coil conformation. The residue at position 256 (Ser256) is a Phosphoserine. The span at 265–278 (LLPQSKKSPSRLSP) shows a compositional bias: low complexity. The segment at 265-336 (LLPQSKKSPS…QHRQRRLQDH (72 aa)) is disordered. Residues 282 to 299 (PPQTQSSAKKESFGSQTT) show a composition bias toward polar residues. Ser288 and Ser293 each carry phosphoserine. WD repeat units follow at residues 405 to 444 (EHHSSIMHCRVDCSGRRVASLDVDGVIKVWSFNPIMQTKA), 447 to 487 (ISKS…NLCE), 514 to 554 (AASS…QQLQ), 559 to 598 (PEPIAINCTAFNHNGNLLVTGAADGVIRLFDMQQHECAMS), 601 to 640 (AHCGEVYSVEFSYDENTVYSIGEDGKFIQWNIHKSGLKVS), 663 to 701 (VQVPRGRLFAFDSEGNYMLTCSATGGVIYKLGGDDKVLE), and 708 to 746 (GHRAPVVTVDWSTAMDCGTCLTASMDGKIKLTTLLAHKV).

Belongs to the WD repeat WDR91 family. In terms of assembly, interacts with WDR81; involved in early to late endosome cargo transport. Interacts with BECN1; negatively regulates the PI3 kinase/PI3K activity associated with endosomal membranes.

It localises to the early endosome membrane. The protein resides in the late endosome membrane. Its function is as follows. Functions as a negative regulator of the PI3 kinase/PI3K activity associated with endosomal membranes via BECN1, a core subunit of the PI3K complex. By modifying the phosphatidylinositol 3-phosphate/PtdInsP3 content of endosomal membranes may regulate endosome fusion, recycling, sorting and early to late endosome transport. It is for instance, required for the delivery of cargos like BST2/tetherin from early to late endosome and thereby participates indirectly to their degradation by the lysosome. May play a role in meiosis. The protein is WD repeat-containing protein 91 of Bos taurus (Bovine).